The primary structure comprises 413 residues: Transmembrane protein 237B (413 aa).

A disordered region spans residues 1-162 (MDPEAKVSSS…EDDDVITDPQ (162 aa)). The segment covering 112–122 (DLVSNGDTLDQ) has biased composition (polar residues). Transmembrane regions (helical) follow at residues 233–253 (VIGL…IIVV), 274–294 (LAYP…VSAF), 312–332 (LSPV…SLSQ), and 360–380 (ILYP…LAWI).

Belongs to the TMEM237 family.

It is found in the membrane. The protein resides in the cell projection. It localises to the cilium. Component of the transition zone in primary cilia. Required for ciliogenesis. The protein is Transmembrane protein 237B (tmem237b) of Danio rerio (Zebrafish).